A 100-amino-acid polypeptide reads, in one-letter code: NADH-quinone oxidoreductase subunit K (100 aa).

3 consecutive transmembrane segments (helical) span residues 4 to 24, 28 to 48, and 60 to 80; these read LQHG…GLLV, LLFM…AFIV, and VMYI…LALL.

Belongs to the complex I subunit 4L family. As to quaternary structure, NDH-1 is composed of 13 different subunits. Subunits NuoA, H, J, K, L, M, N constitute the membrane sector of the complex.

The protein resides in the cell inner membrane. It catalyses the reaction a quinone + NADH + 5 H(+)(in) = a quinol + NAD(+) + 4 H(+)(out). Its function is as follows. NDH-1 shuttles electrons from NADH, via FMN and iron-sulfur (Fe-S) centers, to quinones in the respiratory chain. The immediate electron acceptor for the enzyme in this species is believed to be ubiquinone. Couples the redox reaction to proton translocation (for every two electrons transferred, four hydrogen ions are translocated across the cytoplasmic membrane), and thus conserves the redox energy in a proton gradient. The polypeptide is NADH-quinone oxidoreductase subunit K (Serratia proteamaculans (strain 568)).